We begin with the raw amino-acid sequence, 633 residues long: Threonine--tRNA ligase (633 aa).

The TGS domain occupies 1–61 (MINIHFSNNL…IENCTFEVIT (61 aa)). The interval 242–533 (DHRKIGRELE…LIEHHSGKFP (292 aa)) is catalytic. Residues Cys333, His384, and His510 each contribute to the Zn(2+) site.

Belongs to the class-II aminoacyl-tRNA synthetase family. As to quaternary structure, homodimer. The cofactor is Zn(2+).

It localises to the cytoplasm. The enzyme catalyses tRNA(Thr) + L-threonine + ATP = L-threonyl-tRNA(Thr) + AMP + diphosphate + H(+). Functionally, catalyzes the attachment of threonine to tRNA(Thr) in a two-step reaction: L-threonine is first activated by ATP to form Thr-AMP and then transferred to the acceptor end of tRNA(Thr). Also edits incorrectly charged L-seryl-tRNA(Thr). This is Threonine--tRNA ligase from Ehrlichia chaffeensis (strain ATCC CRL-10679 / Arkansas).